A 165-amino-acid polypeptide reads, in one-letter code: 2-C-methyl-D-erythritol 2,4-cyclodiphosphate synthase (165 aa).

2 residues coordinate a divalent metal cation: aspartate 13 and histidine 15. 4-CDP-2-C-methyl-D-erythritol 2-phosphate is bound by residues aspartate 13 to histidine 15 and histidine 39 to serine 40. Residue histidine 47 participates in a divalent metal cation binding. 4-CDP-2-C-methyl-D-erythritol 2-phosphate-binding positions include aspartate 61–glycine 63 and phenylalanine 141.

This sequence belongs to the IspF family. In terms of assembly, homotrimer. It depends on a divalent metal cation as a cofactor.

The catalysed reaction is 4-CDP-2-C-methyl-D-erythritol 2-phosphate = 2-C-methyl-D-erythritol 2,4-cyclic diphosphate + CMP. Its pathway is isoprenoid biosynthesis; isopentenyl diphosphate biosynthesis via DXP pathway; isopentenyl diphosphate from 1-deoxy-D-xylulose 5-phosphate: step 4/6. Functionally, involved in the biosynthesis of isopentenyl diphosphate (IPP) and dimethylallyl diphosphate (DMAPP), two major building blocks of isoprenoid compounds. Catalyzes the conversion of 4-diphosphocytidyl-2-C-methyl-D-erythritol 2-phosphate (CDP-ME2P) to 2-C-methyl-D-erythritol 2,4-cyclodiphosphate (ME-CPP) with a corresponding release of cytidine 5-monophosphate (CMP). This Thermotoga neapolitana (strain ATCC 49049 / DSM 4359 / NBRC 107923 / NS-E) protein is 2-C-methyl-D-erythritol 2,4-cyclodiphosphate synthase.